We begin with the raw amino-acid sequence, 352 residues long: Histidine biosynthesis bifunctional protein HisB (352 aa).

The interval 1 to 164 (MSQKILFIDR…EIENEILSSF (164 aa)) is histidinol-phosphatase. D9 acts as the Nucleophile in catalysis. Mg(2+)-binding residues include D9 and D11. The active-site Proton donor is D11. C93, H95, C101, and C103 together coordinate Zn(2+). D130 serves as a coordination point for Mg(2+). The interval 165–352 (RSASYQRTTK…ENLASSKGVI (188 aa)) is imidazoleglycerol-phosphate dehydratase.

This sequence in the N-terminal section; belongs to the histidinol-phosphatase family. In the C-terminal section; belongs to the imidazoleglycerol-phosphate dehydratase family. It depends on Mg(2+) as a cofactor. Zn(2+) is required as a cofactor.

It is found in the cytoplasm. It catalyses the reaction D-erythro-1-(imidazol-4-yl)glycerol 3-phosphate = 3-(imidazol-4-yl)-2-oxopropyl phosphate + H2O. The enzyme catalyses L-histidinol phosphate + H2O = L-histidinol + phosphate. It functions in the pathway amino-acid biosynthesis; L-histidine biosynthesis; L-histidine from 5-phospho-alpha-D-ribose 1-diphosphate: step 6/9. The protein operates within amino-acid biosynthesis; L-histidine biosynthesis; L-histidine from 5-phospho-alpha-D-ribose 1-diphosphate: step 8/9. This Campylobacter jejuni subsp. doylei (strain ATCC BAA-1458 / RM4099 / 269.97) protein is Histidine biosynthesis bifunctional protein HisB.